We begin with the raw amino-acid sequence, 2226 residues long: Rotatin (2226 aa).

A disordered region spans residues 295–345; that stretch reads ARGTHHSQNPSPGSSSPRPSVVGRTGQRPRGDGQDWDAASSSGSSSHAHVN. 2 stretches are compositionally biased toward low complexity: residues 304-318 and 332-343; these read PSPGSSSPRPSVVGR and AASSSGSSSHAH. Ser-310 carries the phosphoserine modification. An N6-acetyllysine modification is found at Lys-811. Positions 1534–1554 are disordered; sequence SRTSQDRDPSSLSTSETTVAP. Over residues 1543-1554 the composition is skewed to polar residues; the sequence is SSLSTSETTVAP.

The protein belongs to the rotatin family. As to quaternary structure, interacts with PPP1R35; this interaction allows the mutual recruitment to the centriole.

Its subcellular location is the cytoplasm. The protein localises to the cytoskeleton. It localises to the cilium basal body. It is found in the microtubule organizing center. The protein resides in the centrosome. In terms of biological role, involved in the genetic cascade that governs left-right specification. Plays a role in the maintenance of a normal ciliary structure. Required for correct asymmetric expression of NODAL, LEFTY and PITX2. This Homo sapiens (Human) protein is Rotatin.